We begin with the raw amino-acid sequence, 365 residues long: Poly(rC)-binding protein 2 (365 aa).

2 KH domains span residues 13–75 (TLTI…FAMI) and 97–162 (PVTL…VKQI). Lys-115 is covalently cross-linked (Glycyl lysine isopeptide (Lys-Gly) (interchain with G-Cter in SUMO2)). Ser-173 carries the phosphoserine modification. Lys-185 participates in a covalent cross-link: Glycyl lysine isopeptide (Lys-Gly) (interchain with G-Cter in SUMO2). Residues Ser-189 and Ser-272 each carry the phosphoserine modification. Residues 287–351 (TTSHELTIPN…ASISLAQYLI (65 aa)) enclose the KH 3 domain. Residue Lys-322 forms a Glycyl lysine isopeptide (Lys-Gly) (interchain with G-Cter in SUMO2) linkage. 2 positions are modified to phosphoserine: Ser-364 and Ser-365.

Identified in a mRNP complex, at least composed of DHX9, DDX3X, ELAVL1, HNRNPU, IGF2BP1, ILF3, PABPC1, PCBP2, PTBP2, STAU1, STAU2, SYNCRIP and YBX1. Interacts with IFIH1 and RNF135. Interacts with MAVS (via C-terminus) and ITCH (via WW domains). Interacts with CGAS; preventing the formation of liquid-like droplets in which CGAS is activated. In terms of processing, phosphorylated. The non-phosphorylated form(s) exhibited the strongest poly(rC)-binding activity. Post-translationally, (Microbial infection) Proteolytically cleaved by picornavirus proteinase 3CD. In terms of tissue distribution, detected in all tissues examined.

It localises to the nucleus. The protein localises to the cytoplasm. Its function is as follows. Single-stranded nucleic acid binding protein that binds preferentially to oligo dC. Major cellular poly(rC)-binding protein. Also binds poly(rU). Acts as a negative regulator of antiviral signaling. Negatively regulates cellular antiviral responses mediated by MAVS signaling. It acts as an adapter between MAVS and the E3 ubiquitin ligase ITCH, therefore triggering MAVS ubiquitination and degradation. Negativeley regulates the cGAS-STING pathway via interaction with CGAS, preventing the formation of liquid-like droplets in which CGAS is activated. Together with PCBP1, required for erythropoiesis, possibly by regulating mRNA splicing. (Microbial infection) In case of infection by poliovirus, binds to the viral internal ribosome entry site (IRES) and stimulates the IRES-mediated translation. Also plays a role in initiation of viral RNA replication in concert with the viral protein 3CD. The protein is Poly(rC)-binding protein 2 of Homo sapiens (Human).